The chain runs to 907 residues: Putative ATP-dependent DNA helicase DDX11-like protein 8 (907 aa).

The Helicase ATP-binding domain occupies 9 to 447 (GAIHFPFPFT…KNLMYLKQIL (439 aa)). 44 to 51 (SPTGTGKS) contributes to the ATP binding site. A disordered region spans residues 202 to 222 (YESDEEKKVASGHRVDEDEDD). The segment covering 206 to 217 (EEKKVASGHRVD) has biased composition (basic and acidic residues). S264 bears the Phosphoserine mark. The [4Fe-4S] cluster site is built by C269 and C287. Positions 291 to 306 (QRSRHEKKKGAEEEKP) are enriched in basic and acidic residues. A disordered region spans residues 291-314 (QRSRHEKKKGAEEEKPKRRRQEKQ). 2 residues coordinate [4Fe-4S] cluster: C317 and C352. The DEAH motif lies at 395 to 398 (DEAH).

The protein belongs to the DEAD box helicase family. DEAH subfamily. DDX11/CHL1 sub-subfamily. [4Fe-4S] cluster is required as a cofactor.

It is found in the nucleus. The protein localises to the nucleolus. Its function is as follows. Putative DNA helicase. The polypeptide is Putative ATP-dependent DNA helicase DDX11-like protein 8 (DDX11L8) (Homo sapiens (Human)).